Here is a 283-residue protein sequence, read N- to C-terminus: Pantothenate synthetase (283 aa).

30-37 provides a ligand contact to ATP; it reads MGNLHAGH. Residue His37 is the Proton donor of the active site. Gln61 is a binding site for (R)-pantoate. Gln61 is a beta-alanine binding site. 149–152 is an ATP binding site; the sequence is GEKD. (R)-pantoate is bound at residue Gln155. ATP is bound by residues Val178 and 186-189; that span reads LSSR.

Belongs to the pantothenate synthetase family. Homodimer.

It localises to the cytoplasm. The catalysed reaction is (R)-pantoate + beta-alanine + ATP = (R)-pantothenate + AMP + diphosphate + H(+). Its pathway is cofactor biosynthesis; (R)-pantothenate biosynthesis; (R)-pantothenate from (R)-pantoate and beta-alanine: step 1/1. Its function is as follows. Catalyzes the condensation of pantoate with beta-alanine in an ATP-dependent reaction via a pantoyl-adenylate intermediate. The chain is Pantothenate synthetase from Pseudomonas paraeruginosa (strain DSM 24068 / PA7) (Pseudomonas aeruginosa (strain PA7)).